The sequence spans 225 residues: Uridylate kinase (225 aa).

G9–S10 serves as a coordination point for ATP. Residue G44 coordinates UMP. Positions 45 and 49 each coordinate ATP. UMP-binding positions include D66 and T114–T120. The ATP site is built by T140, N141, Y146, and D149.

This sequence belongs to the UMP kinase family. Homohexamer.

The protein localises to the cytoplasm. It catalyses the reaction UMP + ATP = UDP + ADP. It functions in the pathway pyrimidine metabolism; CTP biosynthesis via de novo pathway; UDP from UMP (UMPK route): step 1/1. Its activity is regulated as follows. Inhibited by UTP. In terms of biological role, catalyzes the reversible phosphorylation of UMP to UDP. The protein is Uridylate kinase of Thermococcus onnurineus (strain NA1).